The following is a 261-amino-acid chain: uncharacterized protein (261 aa).

NADP(+) contacts are provided by I33, K60, D78, and N105. The active-site Proton donor is the S157. Residues Y172, K176, and T206 each coordinate NADP(+). The active-site Proton acceptor is the Y172. K176 (lowers pKa of active site Tyr) is an active-site residue.

The protein belongs to the short-chain dehydrogenases/reductases (SDR) family.

The protein localises to the cytoplasm. The protein resides in the nucleus. This is an uncharacterized protein from Schizosaccharomyces pombe (strain 972 / ATCC 24843) (Fission yeast).